Here is a 229-residue protein sequence, read N- to C-terminus: uncharacterized protein (229 aa).

Positions 1 to 26 (MSRNDARYLRCTAALGAAFFACGAAA) are cleaved as a signal peptide.

Belongs to the OmpW/AlkL family.

The protein resides in the cell outer membrane. This is an uncharacterized protein from Sinorhizobium fredii (strain NBRC 101917 / NGR234).